The primary structure comprises 642 residues: Probable glutamate--tRNA ligase, cytoplasmic (642 aa).

152–154 is an L-glutamate binding site; it reads RFP. The 'HIGH' region signature appears at 157 to 166; that stretch reads PNGRLHIGHA. ATP is bound at residue His-162. L-glutamate-binding positions include Asp-188, 326–330, and Arg-344; that span reads YDFAC. ATP contacts are provided by residues Glu-347 and 382-386; that span reads VLSKR. The 'KMSKS' region signature appears at 382-386; it reads VLSKR.

The protein belongs to the class-I aminoacyl-tRNA synthetase family. Glutamate--tRNA ligase type 2 subfamily.

The protein resides in the cytoplasm. It catalyses the reaction tRNA(Glu) + L-glutamate + ATP = L-glutamyl-tRNA(Glu) + AMP + diphosphate. The sequence is that of Probable glutamate--tRNA ligase, cytoplasmic from Encephalitozoon cuniculi (strain GB-M1) (Microsporidian parasite).